The primary structure comprises 236 residues: 2-C-methyl-D-erythritol 4-phosphate cytidylyltransferase (236 aa).

The protein belongs to the IspD/TarI cytidylyltransferase family. IspD subfamily.

The enzyme catalyses 2-C-methyl-D-erythritol 4-phosphate + CTP + H(+) = 4-CDP-2-C-methyl-D-erythritol + diphosphate. The protein operates within isoprenoid biosynthesis; isopentenyl diphosphate biosynthesis via DXP pathway; isopentenyl diphosphate from 1-deoxy-D-xylulose 5-phosphate: step 2/6. Functionally, catalyzes the formation of 4-diphosphocytidyl-2-C-methyl-D-erythritol from CTP and 2-C-methyl-D-erythritol 4-phosphate (MEP). The protein is 2-C-methyl-D-erythritol 4-phosphate cytidylyltransferase of Azoarcus sp. (strain BH72).